The chain runs to 355 residues: tRNA-specific 2-thiouridylase MnmA (355 aa).

Residues 6-13 (LLSGGVDS) and leucine 33 contribute to the ATP site. Cysteine 100 acts as the Nucleophile in catalysis. Cysteines 100 and 195 form a disulfide. ATP is bound at residue glycine 123. Residues 145–147 (KDQ) form an interaction with tRNA region. Residue cysteine 195 is the Cysteine persulfide intermediate of the active site.

The protein belongs to the MnmA/TRMU family.

Its subcellular location is the cytoplasm. It carries out the reaction S-sulfanyl-L-cysteinyl-[protein] + uridine(34) in tRNA + AH2 + ATP = 2-thiouridine(34) in tRNA + L-cysteinyl-[protein] + A + AMP + diphosphate + H(+). Functionally, catalyzes the 2-thiolation of uridine at the wobble position (U34) of tRNA, leading to the formation of s(2)U34. This is tRNA-specific 2-thiouridylase MnmA from Borrelia garinii subsp. bavariensis (strain ATCC BAA-2496 / DSM 23469 / PBi) (Borreliella bavariensis).